A 142-amino-acid polypeptide reads, in one-letter code: UPF0306 protein Ent638_3591 (142 aa).

Belongs to the UPF0306 family.

This Enterobacter sp. (strain 638) protein is UPF0306 protein Ent638_3591.